Consider the following 208-residue polypeptide: Molybdenum cofactor guanylyltransferase (208 aa).

GTP-binding positions include 10–12 (LAG), lysine 23, aspartate 69, and aspartate 103. Residue aspartate 103 coordinates Mg(2+).

This sequence belongs to the MobA family. In terms of assembly, monomer. The cofactor is Mg(2+).

It localises to the cytoplasm. It carries out the reaction Mo-molybdopterin + GTP + H(+) = Mo-molybdopterin guanine dinucleotide + diphosphate. Transfers a GMP moiety from GTP to Mo-molybdopterin (Mo-MPT) cofactor (Moco or molybdenum cofactor) to form Mo-molybdopterin guanine dinucleotide (Mo-MGD) cofactor. The protein is Molybdenum cofactor guanylyltransferase of Mesorhizobium japonicum (strain LMG 29417 / CECT 9101 / MAFF 303099) (Mesorhizobium loti (strain MAFF 303099)).